We begin with the raw amino-acid sequence, 302 residues long: Sulfate adenylyltransferase subunit 2 (302 aa).

Belongs to the PAPS reductase family. CysD subfamily. As to quaternary structure, heterodimer composed of CysD, the smaller subunit, and CysN.

The enzyme catalyses sulfate + ATP + H(+) = adenosine 5'-phosphosulfate + diphosphate. It participates in sulfur metabolism; hydrogen sulfide biosynthesis; sulfite from sulfate: step 1/3. With CysN forms the ATP sulfurylase (ATPS) that catalyzes the adenylation of sulfate producing adenosine 5'-phosphosulfate (APS) and diphosphate, the first enzymatic step in sulfur assimilation pathway. APS synthesis involves the formation of a high-energy phosphoric-sulfuric acid anhydride bond driven by GTP hydrolysis by CysN coupled to ATP hydrolysis by CysD. The polypeptide is Sulfate adenylyltransferase subunit 2 (Escherichia coli O9:H4 (strain HS)).